We begin with the raw amino-acid sequence, 151 residues long: U1 small nuclear ribonucleoprotein C (151 aa).

The Matrin-type zinc finger occupies 4–36 (YYCDYCDTYLTHDSPSVRKTHCTGRKHKDNVKF).

It belongs to the U1 small nuclear ribonucleoprotein C family. U1 snRNP is composed of the 7 core Sm proteins B/B', D1, D2, D3, E, F and G that assemble in a heptameric protein ring on the Sm site of the small nuclear RNA to form the core snRNP, and at least 3 U1 snRNP-specific proteins U1-70K, U1-A and U1-C. U1-C interacts with U1 snRNA and the 5' splice-site region of the pre-mRNA.

Its subcellular location is the nucleus. Component of the spliceosomal U1 snRNP, which is essential for recognition of the pre-mRNA 5' splice-site and the subsequent assembly of the spliceosome. U1-C is directly involved in initial 5' splice-site recognition for both constitutive and regulated alternative splicing. The interaction with the 5' splice-site seems to precede base-pairing between the pre-mRNA and the U1 snRNA. Stimulates commitment or early (E) complex formation by stabilizing the base pairing of the 5' end of the U1 snRNA and the 5' splice-site region. The chain is U1 small nuclear ribonucleoprotein C from Anopheles darlingi (Mosquito).